We begin with the raw amino-acid sequence, 2211 residues long: MPSFFPVFSGLGSGSVFSEENVGRAEENALSPECAVLLQSCHRTFREQVSDAIARNILPEDSIDLDDFAEPASLIRPLSKYSRNVVMQHAALYLHQILAYMTSQKELGNLIGSAGFCTGLLPAAVAAASQTSVITLISQSHHFFQVALWIGIRSEQYRVDHLTNDTQDADGESMLPCSYVLEGVSEAAAQDLLHKTNMGNEVFVSAILSPTRVTISGIPTKLSTFISKHLPANCRTTVAVVHSLYHHESLLEVRNLVMADLERQDTLLQARVELSAPILSTKTGKPLALSSVTTLEQVACAILDLIFIEKVDWLNLQQSIVSHTSQDALDRPINIVNYGPGLGMAPSAFAQAQEKDVCIMDAAKISKGSFQNSGASRLAWDDIAIVGMAVELPGASDADTLWQNLVDGYQACSEIPPSRFNVNDYNNGKGSRTLNTKYGNFLENPFLFDAEHFGISRREAKSMDPQQRILLQTAYRALEDAGYVPDTTTSSARDTFGCWIGNATLDYVDNLRSDIDVYYSTGTLRAFLSARISYVFGWSGPSITLDTACSSSIVALHQAARSILAGDCRSALVGAANTITSPDMYLGLDRAHFLSPSGQCKAFDASADGYCRAEGCGVFVIKRLSDALAEGDRIHGVIKAIEINQSGNTHSITHPHVPTQEALFDKMFRESRINPHEISVVEMHGTGTQAGDPNEVESVRRALCKARSPLNPVYLTSLKANIGHAEAVSGIAGLAKLILMTRNGYIPPQVSLKTLNPRIRPLGVDGAAIDANGTEWPRAGPKKARMSMLNNFGAGGSNAAVIIGEHLSQDESEAQQPACGATIFVCGVSAKNDRALVKLQETVADYLTSAGQSRKPPSLADVCATLTSRRQMYNHRVAVVASSLEELAENLRSASSHNVSKSICEAPEAVFIFSGQGSQYLGMGRELIEQYEDFAHTVNVCDGWLVKNNYPSCLAVITGEQRESEDDKVDAHTWQSFQSAIYVIEVALAKLLESWGIRPQAVAGHSLGEYAALVTAGVIRLMDGLKLVAHRAKLMMEQCDLGQTSMLAVNCSAAVITSIIEASTDFEGLAISCNNSETDCVVGGPVPQLVLLKKHLTDRAQVRSKLLDVPMAFHTAAMDPILEEFTAFAAREVRVFPPTLPVVSNVLGRTVAVGEQAFSPEYFAKQCRGTVAFDDGIKHFLALGDCESTPYRWIEIGPHPSVQPMLRGRLGKAATSHIQLTTLKKNVPPASTLSQLLSHFYQTSSGVNWRSVFSRNAHRRFKLIQLPGMPFFPSEFHVPYREMAGEPASTSQSSGDAASNVVPNSFAVHAIQKLSHGASNSCAIYETPAVLLKEFIEGHLVCGYALCPASVYHEMVLAALNDCQSAAGSSVVWGLSKVSYCAPMVYDGNSNQVLRVVITPRLTLPDRYDFAVMSYVAGTDPNERSTVHCRGVVKQSNMASAELKYSRLQASMKGSMDGLKHVGQLGAPAASCVQVFSKRAMYEKIFTRVVEYSDPYQKVETIRIREDTGEALATCVSPAPYLARDSSIPASHAIFMDVLLHVAGFVSNLNLPNDVMGICKEVGGATTLRAPVVRDGACAPFDVYCSTFDTQDSDGRSFTISNAYAVDSSGVMAVFKGMVFQHVKIPLIEQALKRATRSSPNAAVSASHPAQPKRRNDVTSFVNAQSVERMALPRAAAPVRAAPEVSVPELVAKVCGLDAGQLGVDSRLDAHGVDSLMGIEIAAALSSALGVDVLPDTLGSCDTVGDIERLCEALSPTPVGNDVDNDSPTPGSERGSDSAISTPASVSTVDASSIDMVQIVAELCGARAEAVSPDSELRALGVDSLMFLELADRLQDLDRGIALSSNDLADCQTIGDIERLIVKRPGTPAYQSGISTKIYPEAVHASSEAVRLSAQQPATQISLLASEEAVLPQIERLLHLSQQPEEIQVGSLDRKFSGKSPLFLIHDGSGICTHYRGLRPLGRRVLALHDPKFLIQSSKQRSWASLTTMANEYASSISSTMGMTGGEDCILGGWSFGGVVAFEAARILMSRGHRVKGVVLIDSPPPIGHIPLSESIISAVTAQPAEKDAAAGSTTASKCVSPVASAIRKLVQQSFRICAGLIGDFGTSAELQQRGLSNKPVGPVPRVILLRSAVGWTPPRGYTGAAVEEMENPWLQDRRDRSLATAGWEILTGGPIQCLDIPGNHFQVFDAPNIAAVSAALVDACSEFELK.

The N-terminal acylcarrier protein transacylase domain (SAT) stretch occupies residues 44–246 (TFREQVSDAI…TVAVVHSLYH (203 aa)). One can recognise a Ketosynthase family 3 (KS3) domain in the interval 380–805 (WDDIAIVGMA…GSNAAVIIGE (426 aa)). Catalysis depends on for beta-ketoacyl synthase activity residues Cys-549, His-684, and His-724. A malonyl-CoA:ACP transacylase (MAT) domain region spans residues 910–1228 (VFIFSGQGSQ…QLTTLKKNVP (319 aa)). The For acyl/malonyl transferase activity role is filled by Ser-1006. The N-terminal hotdog fold stretch occupies residues 1309–1440 (HAIQKLSHGA…GVVKQSNMAS (132 aa)). The 321-residue stretch at 1309–1629 (HAIQKLSHGA…FQHVKIPLIE (321 aa)) folds into the PKS/mFAS DH domain. A product template (PT) domain region spans residues 1334–1573 (EFIEGHLVCG…GATTLRAPVV (240 aa)). The active-site Proton acceptor; for dehydratase activity is His-1339. Residues 1473-1629 (VQVFSKRAMY…FQHVKIPLIE (157 aa)) form a C-terminal hotdog fold region. Catalysis depends on Asp-1537, which acts as the Proton donor; for dehydratase activity. Carrier domains lie at 1681-1755 (AAPE…EALS) and 1787-1865 (STVD…VKRP). An O-(pantetheine 4'-phosphoryl)serine modification is found at Ser-1715. A disordered region spans residues 1755–1786 (SPTPVGNDVDNDSPTPGSERGSDSAISTPASV). At Ser-1824 the chain carries O-(pantetheine 4'-phosphoryl)serine. Residues 1937 to 2204 (SGKSPLFLIH…AAVSAALVDA (268 aa)) are thioesterase (TE) domain.

The enzyme catalyses 3 malonyl-CoA + acetyl-CoA + 2 H(+) = orsellinate + 3 CO2 + 4 CoA. It functions in the pathway secondary metabolite biosynthesis. Non-reducing polyketide synthase; part of the gene cluster that mediates the biosynthesis of the bibenzoquinone oosporein, a metabolite required for fungal virulence that acts by evading host immunity to facilitate fungal multiplication in insects. The non-reducing polyketide synthase OpS1 produces orsellinic acid by condensing acetyl-CoA with 3 malonyl-CoA units. Orsellinic acid is then hydroxylated to benzenetriol by the hydroxylase OpS4. The intermediate is oxidized either nonenzymatically to 5,5'-dideoxy-oosporein or enzymatically to benzenetetrol by the oxidoreductase OpS7. The latter is further dimerized to oosporein by the catalase OpS5. OpS6 probably functions en route for protecting cells against oxidative stress by scavenging any leaked free radical form of benzenetetrol by activating the thiol group of glutathione. The sequence is that of Orsellinic acid synthase from Beauveria bassiana (strain ARSEF 2860) (White muscardine disease fungus).